The sequence spans 317 residues: Dimethyladenosine transferase (317 aa).

Residues 1 to 22 (MAKAPAKKFSGGAQRESAGGEQ) form a disordered region. S-adenosyl-L-methionine is bound by residues His37, Leu39, Gly64, Glu85, Asp113, and Asn128.

The protein belongs to the class I-like SAM-binding methyltransferase superfamily. rRNA adenine N(6)-methyltransferase family.

It carries out the reaction adenosine(1779)/adenosine(1780) in 18S rRNA + 4 S-adenosyl-L-methionine = N(6)-dimethyladenosine(1779)/N(6)-dimethyladenosine(1780) in 18S rRNA + 4 S-adenosyl-L-homocysteine + 4 H(+). Specifically dimethylates two adjacent adenosines in the loop of a conserved hairpin near the 3'-end of 18S rRNA in the 40S particle. In Yarrowia lipolytica (strain CLIB 122 / E 150) (Yeast), this protein is Dimethyladenosine transferase (DIM1).